Reading from the N-terminus, the 194-residue chain is Holliday junction branch migration complex subunit RuvA (194 aa).

Residues 1–64 are domain I; sequence MIGRLRGVLT…DDSAALYGFL (64 aa). A domain II region spans residues 65–140; the sequence is SESERRLFRH…RAADFNNGIS (76 aa). Positions 140-144 are flexible linker; sequence STSGK. The interval 145–194 is domain III; that stretch reads LNLDTVSEAALALQQLGYKPAEAARMARDAGTESDDVAIVIKKALQTVLR.

The protein belongs to the RuvA family. In terms of assembly, homotetramer. Forms an RuvA(8)-RuvB(12)-Holliday junction (HJ) complex. HJ DNA is sandwiched between 2 RuvA tetramers; dsDNA enters through RuvA and exits via RuvB. An RuvB hexamer assembles on each DNA strand where it exits the tetramer. Each RuvB hexamer is contacted by two RuvA subunits (via domain III) on 2 adjacent RuvB subunits; this complex drives branch migration. In the full resolvosome a probable DNA-RuvA(4)-RuvB(12)-RuvC(2) complex forms which resolves the HJ.

The protein localises to the cytoplasm. Functionally, the RuvA-RuvB-RuvC complex processes Holliday junction (HJ) DNA during genetic recombination and DNA repair, while the RuvA-RuvB complex plays an important role in the rescue of blocked DNA replication forks via replication fork reversal (RFR). RuvA specifically binds to HJ cruciform DNA, conferring on it an open structure. The RuvB hexamer acts as an ATP-dependent pump, pulling dsDNA into and through the RuvAB complex. HJ branch migration allows RuvC to scan DNA until it finds its consensus sequence, where it cleaves and resolves the cruciform DNA. This Xylella fastidiosa (strain M23) protein is Holliday junction branch migration complex subunit RuvA.